A 318-amino-acid chain; its full sequence is Large ribosomal subunit protein uL10 (318 aa).

A Phosphotyrosine modification is found at Tyr-24. The residue at position 59 (Thr-59) is a Phosphothreonine. Residue Lys-264 forms a Glycyl lysine isopeptide (Lys-Gly) (interchain with G-Cter in ubiquitin) linkage. Lys-298 participates in a covalent cross-link: Glycyl lysine isopeptide (Lys-Gly) (interchain with G-Cter in SUMO1); alternate. Lys-298 is covalently cross-linked (Glycyl lysine isopeptide (Lys-Gly) (interchain with G-Cter in SUMO2); alternate). The disordered stretch occupies residues 298-318 (KVEAKEESEESDEDMGFGLFD). Positions 303–312 (EESEESDEDM) are enriched in acidic residues. A phosphoserine mark is found at Ser-305 and Ser-308.

This sequence belongs to the universal ribosomal protein uL10 family. As to quaternary structure, P0 forms a pentameric complex by interaction with dimers of P1 and P2. Identified in a IGF2BP1-dependent mRNP granule complex containing untranslated mRNAs. Interacts with APEX1. Interacts with FMR1. Post-translationally, ubiquitinated at Lys-264 by RNF14 and RNF25 in response to ribosome collisions (ribosome stalling).

The protein localises to the nucleus. Its subcellular location is the cytoplasm. Its function is as follows. Ribosomal protein P0 is the functional equivalent of E.coli protein L10. The sequence is that of Large ribosomal subunit protein uL10 (RPLP0) from Sus scrofa (Pig).